Here is a 271-residue protein sequence, read N- to C-terminus: MEFWQHIYSNFNVIAFSIFGLKVHWYGIMYVIALLLALLLAKFFVRKFQLDINEKHLDSYFIWVEIGVILGARLGYILIYDANTMYYITHPWQIFNPYINGEFVGIRGMSYHGAIIGFLIATLLFCKKYKANPWIFLDLVALSVPLAYVFGRIGNFLNQELFGRITNVPWGIYVDGVLRHPSQLYEAFLEGIVVFIIVYLARFKQSFQGELILVYAGAYSLARFICEFYREPDFGIGFVLWGMSMGQILSFIMFITALLVYICIKFKKVNI.

The next 4 membrane-spanning stretches (helical) occupy residues 25–45 (WYGI…KFFV), 60–80 (YFIW…ILIY), 103–123 (FVGI…IATL), and 131–151 (ANPW…YVFG). Position 152 (arginine 152) interacts with a 1,2-diacyl-sn-glycero-3-phospho-(1'-sn-glycerol). 3 consecutive transmembrane segments (helical) span residues 181-201 (PSQL…VYLA), 209-229 (GELI…CEFY), and 235-255 (GIGF…IMFI).

This sequence belongs to the Lgt family.

The protein localises to the cell inner membrane. It catalyses the reaction L-cysteinyl-[prolipoprotein] + a 1,2-diacyl-sn-glycero-3-phospho-(1'-sn-glycerol) = an S-1,2-diacyl-sn-glyceryl-L-cysteinyl-[prolipoprotein] + sn-glycerol 1-phosphate + H(+). It participates in protein modification; lipoprotein biosynthesis (diacylglyceryl transfer). Catalyzes the transfer of the diacylglyceryl group from phosphatidylglycerol to the sulfhydryl group of the N-terminal cysteine of a prolipoprotein, the first step in the formation of mature lipoproteins. This chain is Phosphatidylglycerol--prolipoprotein diacylglyceryl transferase, found in Campylobacter jejuni (strain RM1221).